A 51-amino-acid polypeptide reads, in one-letter code: Gene 62 protein (51 aa).

The sequence is that of Gene 62 protein (62) from Mycobacterium (Mycobacteriophage L5).